Consider the following 314-residue polypeptide: Very long chain fatty acid elongase 4 (314 aa).

A glycan (N-linked (GlcNAc...) asparagine) is linked at asparagine 20. 7 consecutive transmembrane segments (helical) span residues 42–62 (LMQSPWPTLSISTLYLLFVWL), 78–98 (VLIIYNFGMVLLNLFIFRELF), 127–147 (ALWWYFVSKGVEYLDTVFFIL), 165–185 (MFTLWWIGIKWVAGGQAFFGA), 188–208 (NSFIHVIMYSYYGLTAFGPWI), 217–237 (YLTMLQLIQFHVTIGHTALSL), and 247–267 (MHWALIAYAISFIFLFLNFYI). The segment at 275-314 (KPKAGKTAMNGISANGVSKSEKQLMIENGKKQKNGKAKGD) is disordered. Over residues 293–304 (KSEKQLMIENGK) the composition is skewed to basic and acidic residues. The span at 305–314 (KQKNGKAKGD) shows a compositional bias: basic residues. The Di-lysine motif motif lies at 310–314 (KAKGD).

This sequence belongs to the ELO family. ELOVL4 subfamily. In terms of assembly, oligomer. Post-translationally, N-glycosylated. Expressed in the retina and at much lower level in the brain. Ubiquitous, highest expression in thymus, followed by testis, small intestine, ovary, and prostate. Little or no expression in heart, lung, liver, or leukocates.

It is found in the endoplasmic reticulum membrane. It carries out the reaction a very-long-chain acyl-CoA + malonyl-CoA + H(+) = a very-long-chain 3-oxoacyl-CoA + CO2 + CoA. It catalyses the reaction tetracosanoyl-CoA + malonyl-CoA + H(+) = 3-oxohexacosanoyl-CoA + CO2 + CoA. The enzyme catalyses hexacosanoyl-CoA + malonyl-CoA + H(+) = 3-oxooctacosanyol-CoA + CO2 + CoA. The catalysed reaction is octacosanoyl-CoA + malonyl-CoA + H(+) = 3-oxo-triacontanoyl-CoA + CO2 + CoA. It carries out the reaction triacontanoyl-CoA + malonyl-CoA + H(+) = 3-oxo-dotriacontanoyl-CoA + CO2 + CoA. It catalyses the reaction (19Z,22Z,25Z,28Z,31Z)-tetratriacontapentaenoyl-CoA + malonyl-CoA + H(+) = 3-oxo-(21Z,24Z,27Z,30Z,33Z)-hexatriacontapentaenoyl-CoA + CO2 + CoA. The enzyme catalyses (4Z,7Z,10Z,13Z,16Z,19Z)-docosahexaenoyl-CoA + malonyl-CoA + H(+) = 3-oxo-(6Z,9Z,12Z,15Z,18Z,21Z)-tetracosahexaenoyl-CoA + CO2 + CoA. The catalysed reaction is (7Z,10Z,13Z,16Z)-docosatetraenoyl-CoA + malonyl-CoA + H(+) = (9Z,12Z,15Z,18Z)-3-oxotetracosatetraenoyl-CoA + CO2 + CoA. It carries out the reaction (11Z,14Z,17Z,20Z,23Z)-hexacosapentaenoyl-CoA + malonyl-CoA + H(+) = 3-oxo-(13Z,16Z,19Z,22Z,25Z)-octacosapentaenoyl-CoA + CO2 + CoA. It catalyses the reaction (13Z,16Z,19Z,22Z,25Z)-octacosapentaenoyl-CoA + malonyl-CoA + H(+) = 3-oxo-(15Z,18Z,21Z,24Z,27Z)-triacontapentaenoyl-CoA + CO2 + CoA. The enzyme catalyses (15Z,18Z,21Z,24Z,27Z)-triacontapentaenoyl-CoA + malonyl-CoA + H(+) = 3-oxo-(17Z,20Z,23Z,26Z,29Z)-dotriacontapentaenoyl-CoA + CO2 + CoA. The catalysed reaction is (17Z,20Z,23Z,26Z,29Z)-dotriacontapentaenoyl-CoA + malonyl-CoA + H(+) = 3-oxo-(19Z,22Z,25Z,28Z,31Z)-tetratriacontapentaenoyl-CoA + CO2 + CoA. It carries out the reaction (21Z,24Z,27Z,30Z,33Z)-hexatriacontapentaenoyl-CoA + malonyl-CoA + H(+) = 3-oxo-(23Z,26Z,29Z,32Z,35Z)-octatriacontapentaenoyl-CoA + CO2 + CoA. It catalyses the reaction (11Z,14Z,17Z,20Z)-hexacosatetraenoyl-CoA + malonyl-CoA + H(+) = (13Z,16Z,19Z,22Z)-3-oxooctacosatetraenoyl-CoA + CO2 + CoA. The enzyme catalyses (13Z,16Z,19Z,22Z)-octacosatetraenoyl-CoA + malonyl-CoA + H(+) = 3-oxo-(15Z,18Z,21Z,24Z)-triacontatetraenoyl-CoA + CO2 + CoA. The catalysed reaction is (15Z,18Z,21Z,24Z)-triacontatetraenoyl-CoA + malonyl-CoA + H(+) = 3-oxo-(17Z,20Z,23Z,26Z)-dotriacontatetraenoyl-CoA + CO2 + CoA. It carries out the reaction (17Z,20Z,23Z,26Z)-dotriacontatetraenoyl-CoA + malonyl-CoA + H(+) = 3-oxo-(19Z,22Z,25Z,28Z)-tetratriacontatetraenoyl-CoA + CO2 + CoA. It catalyses the reaction (19Z,22Z,25Z,28Z)-tetratriacontatetraenoyl-CoA + malonyl-CoA + H(+) = 3-oxo-(21Z,24Z,27Z,30Z)-hexatriacontatetraenoyl-CoA + CO2 + CoA. The enzyme catalyses (21Z,24Z,27Z,30Z)-hexatriacontatetraenoyl-CoA + malonyl-CoA + H(+) = 3-oxo-(23Z,26Z,29Z,32Z)-octatriacontatetraenoyl-CoA + CO2 + CoA. The catalysed reaction is (6Z,9Z,12Z,15Z,18Z,21Z)-tetracosahexaenoyl-CoA + malonyl-CoA + H(+) = 3-oxo-(8Z,11Z,14Z,17Z,20Z,23Z)-hexacosahexaenoyl-CoA + CO2 + CoA. It carries out the reaction (8Z,11Z,14Z,17Z,20Z,23Z)-hexacosahexaenoyl-CoA + malonyl-CoA + H(+) = 3-oxo-(10Z,13Z,16Z,19Z,22Z,25Z)-octacosahexaenoyl-CoA + CO2 + CoA. It catalyses the reaction (10Z,13Z,16Z,19Z,22Z,25Z)-octacosahexaenoyl-CoA + malonyl-CoA + H(+) = 3-oxo-(12Z,15Z,18Z,21Z,24Z,27Z)-triacontahexaenoyl-CoA + CO2 + CoA. The enzyme catalyses (12Z,15Z,18Z,21Z,24Z,27Z)-triacontahexaenoyl-CoA + malonyl-CoA + H(+) = 3-oxo-(14Z,17Z,20Z,23Z,26Z,29Z)-dotriacontahexaenoyl-CoA + CO2 + CoA. The catalysed reaction is (14Z,17Z,20Z,23Z,26Z,29Z)-dotriacontahexaenoyl-CoA + malonyl-CoA + H(+) = 3-oxo-(16Z,19Z,22Z,25Z,28Z,31Z)-tetratriacontahexaenoyl-CoA + CO2 + CoA. It carries out the reaction (16Z,19Z,22Z,25Z,28Z,31Z)-tetratriacontahexaenoyl-CoA + malonyl-CoA + H(+) = 3-oxo-(18Z,21Z,24Z,27Z,30Z,33Z)-hexatriacontahexaenoyl-CoA + CO2 + CoA. It catalyses the reaction (9Z,12Z,15Z,18Z,21Z)-tetracosapentaenoyl-CoA + malonyl-CoA + H(+) = 3-oxo-(11Z,14Z,17Z,20Z,23Z)-hexacosapentaenoyl-CoA + CO2 + CoA. The protein operates within lipid metabolism; fatty acid biosynthesis. In terms of biological role, catalyzes the first and rate-limiting reaction of the four reactions that constitute the long-chain fatty acids elongation cycle. This endoplasmic reticulum-bound enzymatic process allows the addition of 2 carbons to the chain of long- and very long-chain fatty acids (VLCFAs) per cycle. Condensing enzyme that catalyzes the synthesis of very long chain saturated (VLC-SFA) and polyunsaturated (PUFA) fatty acids that are involved in multiple biological processes as precursors of membrane lipids and lipid mediators. May play a critical role in early brain and skin development. The sequence is that of Very long chain fatty acid elongase 4 from Homo sapiens (Human).